The following is a 410-amino-acid chain: Transcription factor Dp-1 (410 aa).

An N6-acetyllysine modification is found at Lys3. Ser23 is modified (phosphoserine). Residues 73–100 show a composition bias toward polar residues; the sequence is SNTLVVGSPHTPSTHFASQNQPSDSSPW. The interval 73 to 116 is disordered; the sequence is SNTLVVGSPHTPSTHFASQNQPSDSSPWSAGKRNRKGEKNGKGL. The segment covering 104-116 has biased composition (basic residues); that stretch reads KRNRKGEKNGKGL. An interaction with CEBPA region spans residues 105-127; the sequence is RNRKGEKNGKGLRHFSMKVCEKV. A DNA-binding region spans residues 113 to 195; it reads GKGLRHFSMK…KKEIKWIGLP (83 aa). A DEF box motif is present at residues 161 to 195; it reads DQKNIRRRVYDALNVLMAMNIISKEKKEIKWIGLP. The interval 204-277 is dimerization; the sequence is NLEVERQRRL…KKTVIDCSIS (74 aa). An enhances binding of RB protein to E2F region spans residues 211–327; sequence RRLERIKQKQ…DLKMARSLVP (117 aa). Residues 214–246 form a DCB1 region; that stretch reads ERIKQKQSQLQELILQQIAFKNLVQRNRHAEQQ. The interval 259–315 is DCB2; sequence LPFIIVNTSKKTVIDCSISNDKFEYLFNFDNTFEIHDDIEVLKRMGMACGLESGSCS. Residues 370 to 410 form a disordered region; that stretch reads GMLATSSNGSQYSGSRVETPVSYVGEDDEEDDDFNENDEDD. Positions 373-385 are enriched in polar residues; the sequence is ATSSNGSQYSGSR. Residues 394–410 are compositionally biased toward acidic residues; it reads GEDDEEDDDFNENDEDD.

The protein belongs to the E2F/DP family. In terms of assembly, component of the E2F:DP transcription factor complex. Forms heterodimers with E2F family members. The complex can interact with hypophosphorylated retinoblastoma protein RB1 and related proteins (RBL1 and RBL2) that inhibit the E2F transactivation domain. This repression involves recruitment of histone deacetylase (HDAC). During the cell cycle, from mid-to-late G1 phase, RB family members become phosphorylated, detach from the DRTF1/E2F complex to render E2F transcriptionally active. Viral oncoproteins, notably E1A, T-antigen and HPV E7, are capable of sequestering RB protein, thus releasing the active complex. Part of the E2F6.com-1 complex in G0 phase is composed of E2F6, MGA, MAX, TFDP1, CBX3, BAT8, EUHMTASE1, RING1, RNF2, MBLR, L3MBTL2 YAF2. Component of the DREAM complex (also named LINC complex) at least composed of E2F4, E2F5, LIN9, LIN37, LIN52, LIN54, MYBL1, MYBL2, RBL1, RBL2, RBBP4, TFDP1 and TFDP2. The complex exists in quiescent cells where it represses cell cycle-dependent genes. It dissociates in S phase when LIN9, LIN37, LIN52 and LIN54 form a subcomplex that binds to MYBL2. The complex TFDP1:E2F1 interacts with CEBPA; the interaction prevents CEBPA binding to target gene promoters and represses its transcriptional activity. In terms of processing, phosphorylation by E2F1-bound cyclin A-CDK2, in the S phase, inhibits E2F-mediated DNA binding and transactivation. Ubiquitinated by the BCR(KBTBD5) complex, leading to its subsequent degradation. As to expression, highest levels in muscle. Also expressed in brain, placenta, liver and kidney. Lower levels in lung and pancreas. Not detected in heart.

Its subcellular location is the nucleus. The protein localises to the cytoplasm. Its function is as follows. Can stimulate E2F-dependent transcription. Binds DNA cooperatively with E2F family members through the E2 recognition site, 5'-TTTC[CG]CGC-3', found in the promoter region of a number of genes whose products are involved in cell cycle regulation or in DNA replication. The E2F1:DP complex appears to mediate both cell proliferation and apoptosis. Blocks adipocyte differentiation by repressing CEBPA binding to its target gene promoters. In Homo sapiens (Human), this protein is Transcription factor Dp-1 (TFDP1).